The sequence spans 173 residues: Cytochrome c homolog (173 aa).

Residues 1-8 (MSGKELNK) are Cytoplasmic-facing. Residues 9 to 29 (IVAAILFASLIAMMVGFIANI) form a helical; Signal-anchor membrane-spanning segment. At 30–173 (LYKPVLEPKH…LFLKTYVHDK (144 aa)) the chain is on the periplasmic side. Heme c contacts are provided by Cys-82, Cys-85, His-86, and Met-148.

It belongs to the cytochrome c family. Binds 1 heme c group covalently per subunit.

Its subcellular location is the cell membrane. May be involved in electron transfer from bc1 complex to aa3. The chain is Cytochrome c homolog (cycM) from Rickettsia bellii (strain RML369-C).